The primary structure comprises 359 residues: 4-hydroxy-3-methylbut-2-en-1-yl diphosphate synthase (flavodoxin) (359 aa).

Residues Cys264, Cys267, Cys299, and Glu306 each coordinate [4Fe-4S] cluster.

Belongs to the IspG family. Requires [4Fe-4S] cluster as cofactor.

It catalyses the reaction (2E)-4-hydroxy-3-methylbut-2-enyl diphosphate + oxidized [flavodoxin] + H2O + 2 H(+) = 2-C-methyl-D-erythritol 2,4-cyclic diphosphate + reduced [flavodoxin]. The protein operates within isoprenoid biosynthesis; isopentenyl diphosphate biosynthesis via DXP pathway; isopentenyl diphosphate from 1-deoxy-D-xylulose 5-phosphate: step 5/6. Functionally, converts 2C-methyl-D-erythritol 2,4-cyclodiphosphate (ME-2,4cPP) into 1-hydroxy-2-methyl-2-(E)-butenyl 4-diphosphate. The protein is 4-hydroxy-3-methylbut-2-en-1-yl diphosphate synthase (flavodoxin) of Helicobacter pylori (strain Shi470).